The chain runs to 284 residues: Serine protease 57 (284 aa).

Positions 1 to 35 (MPSSTAMVPGTRGGWHCLVLTTAAALTQLMWLPGC) are cleaved as a signal peptide. Positions 40–269 (IVGGHEVTPH…FVTWIWDVVR (230 aa)) constitute a Peptidase S1 domain. A disulfide bridge connects residues cysteine 65 and cysteine 81. Residues histidine 80 and aspartate 128 each act as charge relay system in the active site. N-linked (GlcNAc...) asparagine glycosylation occurs at asparagine 135. Disulfide bonds link cysteine 163-cysteine 230, cysteine 194-cysteine 208, and cysteine 220-cysteine 245. The active-site Charge relay system is the serine 224.

This sequence belongs to the peptidase S1 family. In terms of processing, after cleavage of the signal peptide, the N-terminus is probably further processed by CTSC. Processing by CTSC is probably required for accumulation in cytoplasmic granules; in the absence of CTSC the protein does not accumulate. Post-translationally, N-glycosylated.

It localises to the cytoplasmic granule lumen. Its subcellular location is the secreted. Its function is as follows. Serine protease that cleaves preferentially after Arg residues. Can also cleave after citrulline (deimidated arginine) and methylarginine residues. The protein is Serine protease 57 (Prss57) of Mus musculus (Mouse).